The following is a 90-amino-acid chain: MARMVQCIKLNKEAEGMDFAPLPGELGKKIWNQVSKEAWAAWLKQQTMLINENRLNMADPRARQYLLKQVEKYFFEGGADMAQGYVPEAE.

Belongs to the Fe(2+)-trafficking protein family.

In terms of biological role, could be a mediator in iron transactions between iron acquisition and iron-requiring processes, such as synthesis and/or repair of Fe-S clusters in biosynthetic enzymes. This is Probable Fe(2+)-trafficking protein from Polynucleobacter asymbioticus (strain DSM 18221 / CIP 109841 / QLW-P1DMWA-1) (Polynucleobacter necessarius subsp. asymbioticus).